A 107-amino-acid polypeptide reads, in one-letter code: Antimicrobial peptide microplusin (107 aa).

Residues 1-19 form the signal peptide; that stretch reads MKSLLVCLVLAVVVLVASG. Disulfide bonds link cysteine 25–cysteine 60, cysteine 38–cysteine 88, and cysteine 49–cysteine 54. The disordered stretch occupies residues 86-107; sequence TDCDHSHGHEHSHGHEHGHGHH. The segment covering 87-107 has biased composition (basic and acidic residues); it reads DCDHSHGHEHSHGHEHGHGHH.

It localises to the secreted. Its function is as follows. Has bacteriostatic activity against Gram-positive bacteria, but not against Gram-negative bacteria. Has fungistatic activity against some but not all fungi. Binds and sequesters copper and iron ions. Copper-chelating is crucial for antimicrobial activity against M.luteus. In Ixodes scapularis (Black-legged tick), this protein is Antimicrobial peptide microplusin.